Here is a 554-residue protein sequence, read N- to C-terminus: Capsid vertex component 2 (554 aa).

An interaction with major capsid protein/MCP region spans residues 1–46; that stretch reads MTQLSLFYQFPIQPIFEGHVRNTLICTEEDMQQLQNLGIRKLRKEK.

Belongs to the herpesviridae CVC2 protein family. In terms of assembly, heterodimerizes with CVC1. Interacts with major capsid protein/MCP and triplex capsid protein 1/TRX1 at the pentamer vertices. Interacts with the large tegument protein/LTP.

The protein resides in the virion. Its subcellular location is the host nucleus. Its function is as follows. Capsid vertex-specific component that plays a role during viral DNA encapsidation, assuring correct genome cleavage and presumably stabilizing capsids that contain full-length viral genomes. Participates in the interaction between the capsid and the tegument through interaction with the large tegument protein/LTP. The polypeptide is Capsid vertex component 2 (Human herpesvirus 7 (strain JI) (HHV-7)).